A 275-amino-acid chain; its full sequence is Putative ankyrin repeat protein L715 (275 aa).

4 ANK repeats span residues 94–123 (NINYGLCQAIENYHLKIVELLIDHGADINY), 124–153 (NNGLPLNLAVKNGYYDIIELLIEKKVNTND), 155–183 (IFQLLTHCCQNNLPNSLRILLKENISIDP), and 184–213 (IYSTMVNLCLDNGYAECASILINHNNSDST). A disordered region spans residues 253–275 (NQDESDVGDDAENDIENDIEDDN). Acidic residues predominate over residues 255 to 275 (DESDVGDDAENDIENDIEDDN).

The sequence is that of Putative ankyrin repeat protein L715 from Acanthamoeba polyphaga mimivirus (APMV).